We begin with the raw amino-acid sequence, 146 residues long: Nuclear export protein (146 aa).

In terms of assembly, interacts with host HSC70.

It localises to the host cytoplasm. Functionally, may mediate the nuclear export of encapsidated genomic RNAs (ribonucleoproteins, RNPs). Interaction of viral NEP with M1-Hsc70 is thought to promote nuclear export of the viral encapsidated genomes. The protein is Nuclear export protein of Infectious salmon anemia virus (isolate Atlantic salmon/Norway/810/9/99) (ISAV).